Reading from the N-terminus, the 172-residue chain is Phosphopantetheine adenylyltransferase (172 aa).

T14 serves as a coordination point for substrate. ATP contacts are provided by residues 14–15 (TF) and H22. Substrate is bound by residues K46, L78, and R92. ATP contacts are provided by residues 93-95 (GMR), E103, and 128-134 (WLYISST).

It belongs to the bacterial CoaD family. As to quaternary structure, homohexamer. Requires Mg(2+) as cofactor.

It is found in the cytoplasm. The enzyme catalyses (R)-4'-phosphopantetheine + ATP + H(+) = 3'-dephospho-CoA + diphosphate. Its pathway is cofactor biosynthesis; coenzyme A biosynthesis; CoA from (R)-pantothenate: step 4/5. In terms of biological role, reversibly transfers an adenylyl group from ATP to 4'-phosphopantetheine, yielding dephospho-CoA (dPCoA) and pyrophosphate. The polypeptide is Phosphopantetheine adenylyltransferase (Solidesulfovibrio magneticus (strain ATCC 700980 / DSM 13731 / RS-1) (Desulfovibrio magneticus)).